The primary structure comprises 338 residues: 3-phosphoshikimate 1-carboxyvinyltransferase 2 (338 aa).

Arg-25 serves as a coordination point for phosphoenolpyruvate. 6 residues coordinate 3-phosphoshikimate: Ser-72, Ser-73, Gln-74, Ser-100, Asp-225, and Lys-252. Residue Gln-74 coordinates phosphoenolpyruvate. Asp-225 serves as the catalytic Proton acceptor. Arg-256, Arg-298, and Lys-323 together coordinate phosphoenolpyruvate.

The protein belongs to the EPSP synthase family.

It is found in the plastid. Its subcellular location is the chloroplast. It carries out the reaction 3-phosphoshikimate + phosphoenolpyruvate = 5-O-(1-carboxyvinyl)-3-phosphoshikimate + phosphate. Its pathway is metabolic intermediate biosynthesis; chorismate biosynthesis; chorismate from D-erythrose 4-phosphate and phosphoenolpyruvate: step 6/7. Its function is as follows. Catalyzes the transfer of the enolpyruvyl moiety of phosphoenolpyruvate (PEP) to the 5-hydroxyl of shikimate-3-phosphate (S3P) to produce enolpyruvyl shikimate-3-phosphate and inorganic phosphate. The polypeptide is 3-phosphoshikimate 1-carboxyvinyltransferase 2 (EPSPS-2) (Nicotiana tabacum (Common tobacco)).